Here is a 91-residue protein sequence, read N- to C-terminus: DNA-binding protein HU (91 aa).

Belongs to the bacterial histone-like protein family.

Histone-like DNA-binding protein which is capable of wrapping DNA to stabilize it, and thus to prevent its denaturation under extreme environmental conditions. Also seems to act as a fortuitous virulence factor in delayed sequelae by binding to heparan sulfate-proteoglycans in the extracellular matrix of target organs and acting as a nidus for in situ immune complex formation. The protein is DNA-binding protein HU (hup) of Streptococcus pyogenes serotype M1.